Here is a 301-residue protein sequence, read N- to C-terminus: NAD kinase (301 aa).

D84 serves as the catalytic Proton acceptor. Residues D84–G85, R89, N158–E159, K169, N188, T199–S204, and Q258 contribute to the NAD(+) site.

The protein belongs to the NAD kinase family. A divalent metal cation serves as cofactor.

Its subcellular location is the cytoplasm. The enzyme catalyses NAD(+) + ATP = ADP + NADP(+) + H(+). Involved in the regulation of the intracellular balance of NAD and NADP, and is a key enzyme in the biosynthesis of NADP. Catalyzes specifically the phosphorylation on 2'-hydroxyl of the adenosine moiety of NAD to yield NADP. This chain is NAD kinase, found in Tropheryma whipplei (strain Twist) (Whipple's bacillus).